Consider the following 270-residue polypeptide: Putative phosphoenolpyruvate synthase regulatory protein (270 aa).

Position 150 to 157 (150 to 157 (GVSRCGKT)) interacts with ADP.

It belongs to the pyruvate, phosphate/water dikinase regulatory protein family. PSRP subfamily.

The enzyme catalyses [pyruvate, water dikinase] + ADP = [pyruvate, water dikinase]-phosphate + AMP + H(+). It catalyses the reaction [pyruvate, water dikinase]-phosphate + phosphate + H(+) = [pyruvate, water dikinase] + diphosphate. Bifunctional serine/threonine kinase and phosphorylase involved in the regulation of the phosphoenolpyruvate synthase (PEPS) by catalyzing its phosphorylation/dephosphorylation. The chain is Putative phosphoenolpyruvate synthase regulatory protein from Shewanella denitrificans (strain OS217 / ATCC BAA-1090 / DSM 15013).